Here is a 256-residue protein sequence, read N- to C-terminus: Flap endonuclease Xni (256 aa).

Position 105 (D105) interacts with Mg(2+). The 5'-3' exonuclease domain occupies 164-250; that stretch reads SQFIDFLAMA…LNTRLANFRV (87 aa). M172, A173, P181, I183, and I186 together coordinate K(+). The interval 185-190 is interaction with DNA; sequence GIGPKS.

It belongs to the Xni family. Mg(2+) serves as cofactor. Requires K(+) as cofactor.

Has flap endonuclease activity. During DNA replication, flap endonucleases cleave the 5'-overhanging flap structure that is generated by displacement synthesis when DNA polymerase encounters the 5'-end of a downstream Okazaki fragment. In Shewanella loihica (strain ATCC BAA-1088 / PV-4), this protein is Flap endonuclease Xni.